The sequence spans 171 residues: Adenine phosphoribosyltransferase (171 aa).

This sequence belongs to the purine/pyrimidine phosphoribosyltransferase family. Homodimer.

The protein resides in the cytoplasm. The enzyme catalyses AMP + diphosphate = 5-phospho-alpha-D-ribose 1-diphosphate + adenine. It participates in purine metabolism; AMP biosynthesis via salvage pathway; AMP from adenine: step 1/1. In terms of biological role, catalyzes a salvage reaction resulting in the formation of AMP, that is energically less costly than de novo synthesis. The chain is Adenine phosphoribosyltransferase from Geotalea daltonii (strain DSM 22248 / JCM 15807 / FRC-32) (Geobacter daltonii).